The sequence spans 339 residues: Ketol-acid reductoisomerase (NADP(+)) (339 aa).

Residues 1–182 enclose the KARI N-terminal Rossmann domain; that stretch reads MRVYYDRDAD…GGGRSGIIET (182 aa). NADP(+) is bound by residues 24-27, Lys48, Ser51, Thr53, and 83-86; these read YGSQ and DELQ. The active site involves His108. NADP(+) is bound at residue Gly134. The KARI C-terminal knotted domain occupies 183-328; that stretch reads NFKEECETDL…AKLRGMMPWI (146 aa). The Mg(2+) site is built by Asp191, Glu195, Glu227, and Glu231. Position 252 (Ser252) interacts with substrate.

It belongs to the ketol-acid reductoisomerase family. The cofactor is Mg(2+).

It catalyses the reaction (2R)-2,3-dihydroxy-3-methylbutanoate + NADP(+) = (2S)-2-acetolactate + NADPH + H(+). The catalysed reaction is (2R,3R)-2,3-dihydroxy-3-methylpentanoate + NADP(+) = (S)-2-ethyl-2-hydroxy-3-oxobutanoate + NADPH + H(+). The protein operates within amino-acid biosynthesis; L-isoleucine biosynthesis; L-isoleucine from 2-oxobutanoate: step 2/4. It functions in the pathway amino-acid biosynthesis; L-valine biosynthesis; L-valine from pyruvate: step 2/4. Functionally, involved in the biosynthesis of branched-chain amino acids (BCAA). Catalyzes an alkyl-migration followed by a ketol-acid reduction of (S)-2-acetolactate (S2AL) to yield (R)-2,3-dihydroxy-isovalerate. In the isomerase reaction, S2AL is rearranged via a Mg-dependent methyl migration to produce 3-hydroxy-3-methyl-2-ketobutyrate (HMKB). In the reductase reaction, this 2-ketoacid undergoes a metal-dependent reduction by NADPH to yield (R)-2,3-dihydroxy-isovalerate. In Sinorhizobium fredii (strain NBRC 101917 / NGR234), this protein is Ketol-acid reductoisomerase (NADP(+)).